Reading from the N-terminus, the 186-residue chain is Ribosome maturation factor RimM (186 aa).

Residues 103–174 enclose the PRC barrel domain; the sequence is PEEYHYSDLI…ELQVQPPPGL (72 aa).

It belongs to the RimM family. In terms of assembly, binds ribosomal protein uS19.

The protein localises to the cytoplasm. Its function is as follows. An accessory protein needed during the final step in the assembly of 30S ribosomal subunit, possibly for assembly of the head region. Essential for efficient processing of 16S rRNA. May be needed both before and after RbfA during the maturation of 16S rRNA. It has affinity for free ribosomal 30S subunits but not for 70S ribosomes. This Synechococcus sp. (strain JA-3-3Ab) (Cyanobacteria bacterium Yellowstone A-Prime) protein is Ribosome maturation factor RimM.